Here is a 482-residue protein sequence, read N- to C-terminus: Succinate-semialdehyde dehydrogenase [NADP(+)] GabD (482 aa).

Residues 156 to 157 (WN), 180 to 183 (KPAS), and 233 to 234 (GS) contribute to the NADP(+) site. Glu-255 functions as the Proton acceptor in the catalytic mechanism. An NADP(+)-binding site is contributed by Leu-256. The active-site Nucleophile is Cys-289. Glu-386 is an NADP(+) binding site.

This sequence belongs to the aldehyde dehydrogenase family. Homotetramer.

The catalysed reaction is succinate semialdehyde + NADP(+) + H2O = succinate + NADPH + 2 H(+). It catalyses the reaction 5-oxopentanoate + NADP(+) + H2O = glutarate + NADPH + 2 H(+). It functions in the pathway amino-acid degradation; 4-aminobutanoate degradation. The protein operates within amino-acid degradation. Its function is as follows. Catalyzes the NADP(+)-dependent oxidation of succinate semialdehyde to succinate. Thereby functions in a GABA degradation pathway that allows some E.coli strains to utilize GABA as a nitrogen source for growth. Also catalyzes the conversion of glutarate semialdehyde to glutarate, as part of a L-lysine degradation pathway that proceeds via cadaverine, glutarate and L-2-hydroxyglutarate. The protein is Succinate-semialdehyde dehydrogenase [NADP(+)] GabD (gabD) of Escherichia coli (strain K12).